Consider the following 107-residue polypeptide: V-type proton ATPase subunit G (107 aa).

Belongs to the V-ATPase G subunit family. V-ATPase is a heteromultimeric enzyme composed of a peripheral catalytic V1 complex (components A to H) attached to an integral membrane V0 proton pore complex (components: a, c, c', c'' and d).

Its function is as follows. Catalytic subunit of the peripheral V1 complex of vacuolar ATPase (V-ATPase). V-ATPase is responsible for acidifying a variety of intracellular compartments in eukaryotic cells. The sequence is that of V-type proton ATPase subunit G (atp6v1g) from Dictyostelium discoideum (Social amoeba).